We begin with the raw amino-acid sequence, 500 residues long: Probable malate:quinone oxidoreductase (500 aa).

The protein belongs to the MQO family. The cofactor is FAD.

The catalysed reaction is (S)-malate + a quinone = a quinol + oxaloacetate. The protein operates within carbohydrate metabolism; tricarboxylic acid cycle; oxaloacetate from (S)-malate (quinone route): step 1/1. This chain is Probable malate:quinone oxidoreductase, found in Bacillus cereus (strain B4264).